Consider the following 308-residue polypeptide: Glutaminase (308 aa).

7 residues coordinate substrate: Ser-66, Asn-117, Glu-161, Asn-168, Tyr-192, Tyr-244, and Val-262.

It belongs to the glutaminase family. In terms of assembly, homotetramer.

It catalyses the reaction L-glutamine + H2O = L-glutamate + NH4(+). The protein is Glutaminase of Photorhabdus laumondii subsp. laumondii (strain DSM 15139 / CIP 105565 / TT01) (Photorhabdus luminescens subsp. laumondii).